A 247-amino-acid chain; its full sequence is Neurotrophic factor BDNF precursor form (247 aa).

The first 18 residues, 1–18 (MTILFLTMVISYFGCMKA), serve as a signal peptide directing secretion. Positions 19–128 (APMKEANVRG…AANMSMRVRR (110 aa)) are excised as a propeptide. Asn-121 carries N-linked (GlcNAc...) asparagine glycosylation. Intrachain disulfides connect Cys-141-Cys-208, Cys-186-Cys-237, and Cys-196-Cys-239.

This sequence belongs to the NGF-beta family. In terms of assembly, monomers and homodimers. Binds to NTRK2/TRKB. Can form heterodimers with other neurotrophin family members, such as NTF3 and NTF4 (in vitro), but the physiological relevance of this is not clear. BDNF precursor form: interacts with the heterodimer formed by NGFR and SORCS2. Mature BDNF has much lower affinity for the heterodimer formed by NGFR and SORCS2. In terms of processing, N-glycosylated and glycosulfated, contrary to mature BDNF. Post-translationally, mature BDNF is produced by proteolytic removal of the propeptide, catalyzed by a FURIN family member. In addition, the precursor form is proteolytically cleaved within the propeptide, but this is not an obligatory intermediate for the production of mature BDNF. Can be converted into mature BDNF by plasmin (PLG).

The protein localises to the secreted. In terms of biological role, important signaling molecule that activates signaling cascades downstream of NTRK2. During development, promotes the survival and differentiation of selected neuronal populations of the peripheral and central nervous systems. Participates in axonal growth, pathfinding and in the modulation of dendritic growth and morphology. Major regulator of synaptic transmission and plasticity at adult synapses in many regions of the CNS. The versatility of BDNF is emphasized by its contribution to a range of adaptive neuronal responses including long-term potentiation (LTP), long-term depression (LTD), certain forms of short-term synaptic plasticity, as well as homeostatic regulation of intrinsic neuronal excitability. Its function is as follows. Important signaling molecule that activates signaling cascades downstream of NTRK2. Activates signaling cascades via the heterodimeric receptor formed by NGFR and SORCS2. Signaling via NGFR and SORCS2 plays a role in synaptic plasticity and long-term depression (LTD). Binding to NGFR and SORCS2 promotes neuronal apoptosis. Promotes neuronal growth cone collapse. The chain is Neurotrophic factor BDNF precursor form (BDNF) from Ursus arctos (Brown bear).